The chain runs to 159 residues: E3 ubiquitin ligase complex SCF subunit sconC (159 aa).

The segment at 101–159 (ILAANYLDIKALLDVGCKTVANMIKGKSPEEIRKTFNIQNDFTPEEEDQIRRENEWAEE) is interaction with the F-box domain of F-box proteins.

Belongs to the SKP1 family. In terms of assembly, component of the SCF (SKP1-CUL1-F-box protein) E3 ubiquitin ligase complexes.

The protein operates within protein modification; protein ubiquitination. Essential component of the SCF (SKP1-CUL1-F-box protein) E3 ubiquitin ligase complexes, which mediate the ubiquitination and subsequent proteasomal degradation of target proteins. Controls sulfur metabolite repression, probably by mediating the inactivation or degradation of the metR transcription factor. The sequence is that of E3 ubiquitin ligase complex SCF subunit sconC (sconC) from Aspergillus clavatus (strain ATCC 1007 / CBS 513.65 / DSM 816 / NCTC 3887 / NRRL 1 / QM 1276 / 107).